A 310-amino-acid polypeptide reads, in one-letter code: tRNA dimethylallyltransferase (310 aa).

ATP is bound at residue 12-19 (GPTATGKT). 14 to 19 (TATGKT) contacts substrate. Positions 37 to 40 (DSMM) are interaction with substrate tRNA.

This sequence belongs to the IPP transferase family. Monomer. Mg(2+) is required as a cofactor.

It catalyses the reaction adenosine(37) in tRNA + dimethylallyl diphosphate = N(6)-dimethylallyladenosine(37) in tRNA + diphosphate. Its function is as follows. Catalyzes the transfer of a dimethylallyl group onto the adenine at position 37 in tRNAs that read codons beginning with uridine, leading to the formation of N6-(dimethylallyl)adenosine (i(6)A). The sequence is that of tRNA dimethylallyltransferase from Desulforudis audaxviator (strain MP104C).